A 291-amino-acid chain; its full sequence is Elongation factor Ts, mitochondrial (291 aa).

It belongs to the EF-Ts family.

The protein localises to the mitochondrion. Its function is as follows. Associates with the EF-Tu.GDP complex and induces the exchange of GDP to GTP. It remains bound to the aminoacyl-tRNA.EF-Tu.GTP complex up to the GTP hydrolysis stage on the ribosome. The protein is Elongation factor Ts, mitochondrial of Nematostella vectensis (Starlet sea anemone).